The chain runs to 243 residues: 2,3-bisphosphoglycerate-dependent phosphoglycerate mutase (243 aa).

Substrate is bound by residues arginine 8–asparagine 15, threonine 21–glycine 22, arginine 60, glutamate 87–tyrosine 90, lysine 98, arginine 114–arginine 115, and glycine 183–asparagine 184. Histidine 9 functions as the Tele-phosphohistidine intermediate in the catalytic mechanism. The active-site Proton donor/acceptor is glutamate 87.

This sequence belongs to the phosphoglycerate mutase family. BPG-dependent PGAM subfamily. As to quaternary structure, homodimer.

It carries out the reaction (2R)-2-phosphoglycerate = (2R)-3-phosphoglycerate. The protein operates within carbohydrate degradation; glycolysis; pyruvate from D-glyceraldehyde 3-phosphate: step 3/5. Functionally, catalyzes the interconversion of 2-phosphoglycerate and 3-phosphoglycerate. The polypeptide is 2,3-bisphosphoglycerate-dependent phosphoglycerate mutase (Maricaulis maris (strain MCS10) (Caulobacter maris)).